Consider the following 259-residue polypeptide: Ribonuclease HII (259 aa).

Positions 70-258 constitute an RNase H type-2 domain; the sequence is TLIAGIDEVG…VKSLVLGKKE (189 aa). 3 residues coordinate a divalent metal cation: Asp76, Glu77, and Asp168.

This sequence belongs to the RNase HII family. The cofactor is Mn(2+). Mg(2+) serves as cofactor.

It localises to the cytoplasm. It catalyses the reaction Endonucleolytic cleavage to 5'-phosphomonoester.. In terms of biological role, endonuclease that specifically degrades the RNA of RNA-DNA hybrids. The polypeptide is Ribonuclease HII (Streptococcus pneumoniae serotype 19F (strain G54)).